Reading from the N-terminus, the 485-residue chain is N-succinylglutamate 5-semialdehyde dehydrogenase (485 aa).

220–225 provides a ligand contact to NAD(+); it reads GSANTG. Catalysis depends on residues glutamate 243 and cysteine 278.

It belongs to the aldehyde dehydrogenase family. AstD subfamily.

The enzyme catalyses N-succinyl-L-glutamate 5-semialdehyde + NAD(+) + H2O = N-succinyl-L-glutamate + NADH + 2 H(+). It participates in amino-acid degradation; L-arginine degradation via AST pathway; L-glutamate and succinate from L-arginine: step 4/5. Its function is as follows. Catalyzes the NAD-dependent reduction of succinylglutamate semialdehyde into succinylglutamate. The chain is N-succinylglutamate 5-semialdehyde dehydrogenase from Vibrio atlanticus (strain LGP32) (Vibrio splendidus (strain Mel32)).